Here is a 173-residue protein sequence, read N- to C-terminus: Bifunctional protein PyrR (173 aa).

Positions 93 to 105 (VILIDDVLYTGRT) match the PRPP-binding motif.

Belongs to the purine/pyrimidine phosphoribosyltransferase family. PyrR subfamily. As to quaternary structure, homodimer and homohexamer; in equilibrium.

It catalyses the reaction UMP + diphosphate = 5-phospho-alpha-D-ribose 1-diphosphate + uracil. In terms of biological role, regulates transcriptional attenuation of the pyrimidine nucleotide (pyr) operon by binding in a uridine-dependent manner to specific sites on pyr mRNA. This disrupts an antiterminator hairpin in the RNA and favors formation of a downstream transcription terminator, leading to a reduced expression of downstream genes. Functionally, also displays a weak uracil phosphoribosyltransferase activity which is not physiologically significant. The polypeptide is Bifunctional protein PyrR (Streptococcus pyogenes serotype M49 (strain NZ131)).